Here is a 351-residue protein sequence, read N- to C-terminus: MLYSLVKKYLFSLDAEDAHEKVCKILRMLSSSPFLCNLIDSQWGYQNPKLENEILGLHFPNPLGLAAGFDKNASMLRALMAFGFGYLEAGTLTNEAQVGNERPRLFRHIEEESLQNAMGFNNYGAILGVRSFKRFAPYKTPIGINLGKNKHIEQAHALEDYKAVLSKCLNIGDYYTFNLSSPNTPNLRDLQNKAFVHELFCMAKEMTHKPLFLKIAPDLETDDMLEIVNSAIGAGAHGIIATNTTIDKSLVFAPKEMGGLSGKCLTKKSREIFKELAKAFFNKSVLVSVGGISDAKEAYERIKMGASLLQIYSAFIYNGPNLCQNILKDLVKLLQKDGFLSVKEAIGADLR.

FMN is bound by residues 67–71 and threonine 91; that span reads AGFDK. A substrate-binding site is contributed by lysine 71. Residue 116–120 participates in substrate binding; sequence NAMGF. Residues asparagine 145 and asparagine 178 each coordinate FMN. Residue asparagine 178 participates in substrate binding. Serine 181 (nucleophile) is an active-site residue. Asparagine 183 contributes to the substrate binding site. The FMN site is built by lysine 214 and threonine 242. 243–244 contacts substrate; that stretch reads NT. FMN contacts are provided by residues glycine 262, glycine 291, and 312-313; that span reads YS.

The protein belongs to the dihydroorotate dehydrogenase family. Type 2 subfamily. As to quaternary structure, monomer. The cofactor is FMN.

It is found in the cell membrane. It catalyses the reaction (S)-dihydroorotate + a quinone = orotate + a quinol. It participates in pyrimidine metabolism; UMP biosynthesis via de novo pathway; orotate from (S)-dihydroorotate (quinone route): step 1/1. Catalyzes the conversion of dihydroorotate to orotate with quinone as electron acceptor. The sequence is that of Dihydroorotate dehydrogenase (quinone) (pyrD) from Helicobacter pylori (strain ATCC 700392 / 26695) (Campylobacter pylori).